We begin with the raw amino-acid sequence, 143 residues long: Ribonuclease H (143 aa).

The 136-residue stretch at 1-136 folds into the RNase H type-1 domain; sequence MQEIEIFCDG…CDSLAKLEAQ (136 aa). Asp9, Glu47, Asp69, and Asp128 together coordinate Mg(2+).

It belongs to the RNase H family. In terms of assembly, monomer. Mg(2+) is required as a cofactor.

The protein localises to the cytoplasm. It catalyses the reaction Endonucleolytic cleavage to 5'-phosphomonoester.. Endonuclease that specifically degrades the RNA of RNA-DNA hybrids. This Helicobacter pylori (strain HPAG1) protein is Ribonuclease H.